Consider the following 223-residue polypeptide: Cytidylate kinase (223 aa).

17-25 (GPTASGKGT) provides a ligand contact to ATP.

This sequence belongs to the cytidylate kinase family. Type 1 subfamily.

Its subcellular location is the cytoplasm. It catalyses the reaction CMP + ATP = CDP + ADP. It carries out the reaction dCMP + ATP = dCDP + ADP. In Bordetella pertussis (strain Tohama I / ATCC BAA-589 / NCTC 13251), this protein is Cytidylate kinase.